A 601-amino-acid chain; its full sequence is Deoxyhypusine synthase (601 aa).

Residues 109 to 113 (ANLMG) and 184 to 186 (SGG) contribute to the NAD(+) site. Position 189–190 (189–190 (EH)) interacts with spermidine. Residues 210–242 (GHVSSTVSSEATAPPKGLQQRAEKPLGTRAAAG) are disordered. Positions 211 to 220 (HVSSTVSSEA) are enriched in polar residues. An NAD(+)-binding site is contributed by aspartate 398. The interval 411–451 (PAARPAHRKGGPVADENAGNSKELKRSRKASSSSSTSATAV) is disordered. Low complexity predominate over residues 440–451 (ASSSSSTSATAV). Residue glycine 489 participates in NAD(+) binding. Histidine 494 contributes to the spermidine binding site. Residue 514–515 (NG) coordinates NAD(+). Residues 520–522 (GSD) and 529–535 (EALSWGK) each bind spermidine. The active-site Nucleophile is the lysine 535. An NAD(+)-binding site is contributed by 548-549 (EV). Residues 568-601 (RRATDDAQPRRKRSSRGARPPQDVSGHSHLCRGE) form a disordered region.

This sequence belongs to the deoxyhypusine synthase family. Homodimer. It depends on NAD(+) as a cofactor.

It carries out the reaction [eIF5A protein]-L-lysine + spermidine = [eIF5A protein]-deoxyhypusine + propane-1,3-diamine. It functions in the pathway protein modification; eIF5A hypusination. N1-guanyl-1,7-diaminoheptane has a small inhibitory effect on activity. Catalyzes the NAD-dependent oxidative cleavage of spermidine and the subsequent transfer of the butylamine moiety of spermidine to the epsilon-amino group of a specific lysine residue of the eIF-5A precursor protein to form the intermediate deoxyhypusine residue. The sequence is that of Deoxyhypusine synthase from Leishmania donovani.